A 510-amino-acid chain; its full sequence is ATP synthase subunit alpha (510 aa).

169–176 (GDRQTGKT) serves as a coordination point for ATP.

Belongs to the ATPase alpha/beta chains family. F-type ATPases have 2 components, CF(1) - the catalytic core - and CF(0) - the membrane proton channel. CF(1) has five subunits: alpha(3), beta(3), gamma(1), delta(1), epsilon(1). CF(0) has three main subunits: a(1), b(2) and c(9-12). The alpha and beta chains form an alternating ring which encloses part of the gamma chain. CF(1) is attached to CF(0) by a central stalk formed by the gamma and epsilon chains, while a peripheral stalk is formed by the delta and b chains.

It localises to the cell inner membrane. It catalyses the reaction ATP + H2O + 4 H(+)(in) = ADP + phosphate + 5 H(+)(out). In terms of biological role, produces ATP from ADP in the presence of a proton gradient across the membrane. The alpha chain is a regulatory subunit. The polypeptide is ATP synthase subunit alpha (Anaeromyxobacter dehalogenans (strain 2CP-1 / ATCC BAA-258)).